The sequence spans 123 residues: Large ribosomal subunit protein bL19 (123 aa).

It belongs to the bacterial ribosomal protein bL19 family.

This protein is located at the 30S-50S ribosomal subunit interface and may play a role in the structure and function of the aminoacyl-tRNA binding site. This is Large ribosomal subunit protein bL19 (rplS) from Treponema pallidum (strain Nichols).